Here is a 42-residue protein sequence, read N- to C-terminus: Small, acid-soluble spore protein L (42 aa).

The tract at residues 1-42 is disordered; that stretch reads MKKKDKGRLTGGVTPQGDLEGNTHNDPKTELEERAKKSNTKR. Residues 21–36 are compositionally biased toward basic and acidic residues; sequence GNTHNDPKTELEERAK.

It is found in the spore core. The sequence is that of Small, acid-soluble spore protein L (sspL) from Bacillus subtilis (strain 168).